The following is a 566-amino-acid chain: Proline--tRNA ligase 1 (566 aa).

Belongs to the class-II aminoacyl-tRNA synthetase family. ProS type 1 subfamily. In terms of assembly, homodimer.

Its subcellular location is the cytoplasm. The catalysed reaction is tRNA(Pro) + L-proline + ATP = L-prolyl-tRNA(Pro) + AMP + diphosphate. Catalyzes the attachment of proline to tRNA(Pro) in a two-step reaction: proline is first activated by ATP to form Pro-AMP and then transferred to the acceptor end of tRNA(Pro). As ProRS can inadvertently accommodate and process non-cognate amino acids such as alanine and cysteine, to avoid such errors it has two additional distinct editing activities against alanine. One activity is designated as 'pretransfer' editing and involves the tRNA(Pro)-independent hydrolysis of activated Ala-AMP. The other activity is designated 'posttransfer' editing and involves deacylation of mischarged Ala-tRNA(Pro). The misacylated Cys-tRNA(Pro) is not edited by ProRS. In Bacillus cereus (strain ZK / E33L), this protein is Proline--tRNA ligase 1.